We begin with the raw amino-acid sequence, 153 residues long: MRCPSCHHSGTRVLESRPVEEGRSIRRRRECEQCHYRFTTFERIEEPPLIVVKKEGTREEFSREKILRGLIKACEKRPVALEELEKVTQEIERELRNQGVSEVKSETIGEMVMERLSHIDEVAYVRFASVYRQFKDINVFIEELKELIKKGQR.

Residues 3 to 34 fold into a zinc finger; the sequence is CPSCHHSGTRVLESRPVEEGRSIRRRRECEQC. An ATP-cone domain is found at 49–139; that stretch reads LIVVKKEGTR…VYRQFKDINV (91 aa).

The protein belongs to the NrdR family. Zn(2+) is required as a cofactor.

Its function is as follows. Negatively regulates transcription of bacterial ribonucleotide reductase nrd genes and operons by binding to NrdR-boxes. The protein is Transcriptional repressor NrdR of Geobacillus kaustophilus (strain HTA426).